Consider the following 445-residue polypeptide: Putative MgpC-like protein MPN_464 (445 aa).

Positions serine 23–asparagine 44 are disordered. Residues serine 31–aspartate 43 are compositionally biased toward low complexity.

It belongs to the MgpC family.

The protein is Putative MgpC-like protein MPN_464 of Mycoplasma pneumoniae (strain ATCC 29342 / M129 / Subtype 1) (Mycoplasmoides pneumoniae).